The primary structure comprises 249 residues: Deoxyribose-phosphate aldolase (249 aa).

The Proton donor/acceptor role is filled by D109. K171 (schiff-base intermediate with acetaldehyde) is an active-site residue. Residue K200 is the Proton donor/acceptor of the active site.

It belongs to the DeoC/FbaB aldolase family. DeoC type 1 subfamily.

It localises to the cytoplasm. The catalysed reaction is 2-deoxy-D-ribose 5-phosphate = D-glyceraldehyde 3-phosphate + acetaldehyde. It functions in the pathway carbohydrate degradation; 2-deoxy-D-ribose 1-phosphate degradation; D-glyceraldehyde 3-phosphate and acetaldehyde from 2-deoxy-alpha-D-ribose 1-phosphate: step 2/2. Its function is as follows. Catalyzes a reversible aldol reaction between acetaldehyde and D-glyceraldehyde 3-phosphate to generate 2-deoxy-D-ribose 5-phosphate. The polypeptide is Deoxyribose-phosphate aldolase (Klebsiella pneumoniae subsp. pneumoniae (strain ATCC 700721 / MGH 78578)).